A 380-amino-acid polypeptide reads, in one-letter code: Probable cytosolic iron-sulfur protein assembly protein 1 (380 aa).

7 WD repeats span residues 10–49 (AHNDKAWSVSVHPTLPIIATASTDKSTKLYKLSTKQKFPL), 56–108 (THKR…VEYD), 135–175 (GHEN…EEFE), 182–221 (DHSQDVKNVSWHPSMNILASSSYDDTIRIYQQDIAGDEWS), 228–275 (GHEG…EEDK), 299–338 (VHKYPVYSVAWSSLTGKIASAGSDGKIVVYSEAEKGKWVI), and 346–380 (HGVHEINCVIWAQLDDENEILVSAGDDGYVNLWNV).

Belongs to the WD repeat CIA1 family. As to quaternary structure, interacts with NAR1.

It is found in the cytoplasm. The protein resides in the nucleus. Functionally, essential component of the cytosolic iron-sulfur (Fe/S) protein assembly machinery. Required for the maturation of extramitochondrial Fe/S proteins. The sequence is that of Probable cytosolic iron-sulfur protein assembly protein 1 from Candida dubliniensis (strain CD36 / ATCC MYA-646 / CBS 7987 / NCPF 3949 / NRRL Y-17841) (Yeast).